Consider the following 147-residue polypeptide: MADFDMVLKCWGPVEADHATHGSLVLTRLFTEHPETLKLFPKFAGIAHGDLAGDAGVSAHGATVLKKLGDLLKARGGHAALLKPLSSSHATKHKIPIINFKLIAEVIGKVMEEKAGLDAAGQTALRNVMAIIITDMEADYKELGFTE.

A Globin domain is found at 2 to 141; sequence ADFDMVLKCW…IITDMEADYK (140 aa). Histidine 60 serves as a coordination point for nitrite. Residue histidine 60 coordinates O2. Position 89 (histidine 89) interacts with heme b.

This sequence belongs to the globin family. In terms of assembly, monomeric.

The protein resides in the cytoplasm. It is found in the sarcoplasm. It carries out the reaction Fe(III)-heme b-[protein] + nitric oxide + H2O = Fe(II)-heme b-[protein] + nitrite + 2 H(+). The enzyme catalyses H2O2 + AH2 = A + 2 H2O. In terms of biological role, monomeric heme protein which primary function is to store oxygen and facilitate its diffusion within muscle tissues. Reversibly binds oxygen through a pentacoordinated heme iron and enables its timely and efficient release as needed during periods of heightened demand. Depending on the oxidative conditions of tissues and cells, and in addition to its ability to bind oxygen, it also has a nitrite reductase activity whereby it regulates the production of bioactive nitric oxide. Under stress conditions, like hypoxia and anoxia, it also protects cells against reactive oxygen species thanks to its pseudoperoxidase activity. The chain is Myoglobin (mb) from Channichthys rhinoceratus (Unicorn icefish).